The primary structure comprises 149 residues: MLSITARNLASALRSSLVGTSSRVAAVRCLHGTEESAEEFDKRYEKYFSREGIDGWEIRKGMNDLLGMDLVPSPKIIEAGLRASRRVNDIALAIRWLEGCKDKCGDQKATLYPYLLEKITPTLQELGIPTIEELGYDKPELALKSVYDA.

It belongs to the cytochrome c oxidase subunit 5A family. Component of the cytochrome c oxidase (complex IV, CIV), a multisubunit enzyme composed of a catalytic core of 3 subunits and several supernumerary subunits. The complex exists as a monomer or a dimer and forms supercomplexes (SCs) in the inner mitochondrial membrane with ubiquinol-cytochrome c oxidoreductase (cytochrome b-c1 complex, complex III, CIII).

The protein resides in the mitochondrion inner membrane. It participates in energy metabolism; oxidative phosphorylation. Its function is as follows. Component of the cytochrome c oxidase, the last enzyme in the mitochondrial electron transport chain which drives oxidative phosphorylation. The respiratory chain contains 3 multisubunit complexes succinate dehydrogenase (complex II, CII), ubiquinol-cytochrome c oxidoreductase (cytochrome b-c1 complex, complex III, CIII) and cytochrome c oxidase (complex IV, CIV), that cooperate to transfer electrons derived from NADH and succinate to molecular oxygen, creating an electrochemical gradient over the inner membrane that drives transmembrane transport and the ATP synthase. Cytochrome c oxidase is the component of the respiratory chain that catalyzes the reduction of oxygen to water. Electrons originating from reduced cytochrome c in the intermembrane space (IMS) are transferred via the dinuclear copper A center (CU(A)) of subunit 2 and heme A of subunit 1 to the active site in subunit 1, a binuclear center (BNC) formed by heme A3 and copper B (CU(B)). The BNC reduces molecular oxygen to 2 water molecules using 4 electrons from cytochrome c in the IMS and 4 protons from the mitochondrial matrix. This is Cytochrome c oxidase subunit 5A, mitochondrial from Drosophila melanogaster (Fruit fly).